The primary structure comprises 297 residues: Protease HtpX homolog (297 aa).

2 helical membrane passes run 14–34 (IVLL…VGYL) and 38–58 (SLET…IIMV). Zn(2+) is bound at residue histidine 144. Glutamate 145 is a catalytic residue. Histidine 148 contributes to the Zn(2+) binding site. 2 helical membrane passes run 159 to 179 (IALA…NWWF) and 199 to 219 (ILLL…AAAI). Glutamate 228 provides a ligand contact to Zn(2+).

Belongs to the peptidase M48B family. Zn(2+) is required as a cofactor.

It is found in the cell membrane. In Leuconostoc mesenteroides subsp. mesenteroides (strain ATCC 8293 / DSM 20343 / BCRC 11652 / CCM 1803 / JCM 6124 / NCDO 523 / NBRC 100496 / NCIMB 8023 / NCTC 12954 / NRRL B-1118 / 37Y), this protein is Protease HtpX homolog.